We begin with the raw amino-acid sequence, 193 residues long: Large ribosomal subunit protein uL5 (193 aa).

It belongs to the universal ribosomal protein uL5 family. As to quaternary structure, part of the 50S ribosomal subunit; part of the 5S rRNA/L5/L18/L25 subcomplex. Contacts the 5S rRNA and the P site tRNA. Forms a bridge to the 30S subunit in the 70S ribosome.

Its function is as follows. This is one of the proteins that bind and probably mediate the attachment of the 5S RNA into the large ribosomal subunit, where it forms part of the central protuberance. In the 70S ribosome it contacts protein S13 of the 30S subunit (bridge B1b), connecting the 2 subunits; this bridge is implicated in subunit movement. Contacts the P site tRNA; the 5S rRNA and some of its associated proteins might help stabilize positioning of ribosome-bound tRNAs. This is Large ribosomal subunit protein uL5 from Pseudarthrobacter chlorophenolicus (strain ATCC 700700 / DSM 12829 / CIP 107037 / JCM 12360 / KCTC 9906 / NCIMB 13794 / A6) (Arthrobacter chlorophenolicus).